We begin with the raw amino-acid sequence, 339 residues long: Phosphate acyltransferase (339 aa).

The protein belongs to the PlsX family. Homodimer. Probably interacts with PlsY.

Its subcellular location is the cytoplasm. The catalysed reaction is a fatty acyl-[ACP] + phosphate = an acyl phosphate + holo-[ACP]. Its pathway is lipid metabolism; phospholipid metabolism. Functionally, catalyzes the reversible formation of acyl-phosphate (acyl-PO(4)) from acyl-[acyl-carrier-protein] (acyl-ACP). This enzyme utilizes acyl-ACP as fatty acyl donor, but not acyl-CoA. The protein is Phosphate acyltransferase of Vesicomyosocius okutanii subsp. Calyptogena okutanii (strain HA).